A 324-amino-acid polypeptide reads, in one-letter code: Cytosolic sulfotransferase 13 (324 aa).

76 to 81 serves as a coordination point for 3'-phosphoadenylyl sulfate; sequence KSGTTW. Catalysis depends on His-134, which acts as the Proton acceptor. 3'-phosphoadenylyl sulfate-binding positions include Arg-156, Ser-164, Tyr-222, and 288–290; that span reads RKG.

Belongs to the sulfotransferase 1 family.

The protein resides in the cytoplasm. Functionally, sulfotransferase that utilizes 3'-phospho-5'-adenylyl sulfate (PAPS) as sulfonate donor. The chain is Cytosolic sulfotransferase 13 (SOT13) from Arabidopsis thaliana (Mouse-ear cress).